A 436-amino-acid polypeptide reads, in one-letter code: Type II methyltransferase M.BsuRI (436 aa).

The 351-residue stretch at 59-409 (INVLSLFSGC…SPIANWAINY (351 aa)) folds into the SAM-dependent MTase C5-type domain. The active site involves cysteine 157.

This sequence belongs to the class I-like SAM-binding methyltransferase superfamily. C5-methyltransferase family. As to quaternary structure, monomer.

It carries out the reaction a 2'-deoxycytidine in DNA + S-adenosyl-L-methionine = a 5-methyl-2'-deoxycytidine in DNA + S-adenosyl-L-homocysteine + H(+). Its function is as follows. A methylase, recognizes the double-stranded sequence 5'-GGCC-3', methylates C-3 on both strands, and protects the DNA from cleavage by the BsuRI endonuclease. The protein is Type II methyltransferase M.BsuRI (hsdRM) of Bacillus subtilis.